The following is a 259-amino-acid chain: Ribosomal RNA small subunit methyltransferase A (259 aa).

Positions 13, 15, 40, 61, 85, and 103 each coordinate S-adenosyl-L-methionine.

It belongs to the class I-like SAM-binding methyltransferase superfamily. rRNA adenine N(6)-methyltransferase family. RsmA subfamily.

Its subcellular location is the cytoplasm. It carries out the reaction adenosine(1518)/adenosine(1519) in 16S rRNA + 4 S-adenosyl-L-methionine = N(6)-dimethyladenosine(1518)/N(6)-dimethyladenosine(1519) in 16S rRNA + 4 S-adenosyl-L-homocysteine + 4 H(+). Specifically dimethylates two adjacent adenosines (A1518 and A1519) in the loop of a conserved hairpin near the 3'-end of 16S rRNA in the 30S particle. May play a critical role in biogenesis of 30S subunits. The protein is Ribosomal RNA small subunit methyltransferase A of Neisseria gonorrhoeae (strain ATCC 700825 / FA 1090).